The primary structure comprises 545 residues: Chaperonin GroEL 2 (545 aa).

ATP contacts are provided by residues 29-32 (TLGP), 86-90 (DGTTT), Gly413, 479-481 (NAA), and Asp495.

The protein belongs to the chaperonin (HSP60) family. Forms a cylinder of 14 subunits composed of two heptameric rings stacked back-to-back. Interacts with the co-chaperonin GroES.

Its subcellular location is the cytoplasm. The catalysed reaction is ATP + H2O + a folded polypeptide = ADP + phosphate + an unfolded polypeptide.. Functionally, together with its co-chaperonin GroES, plays an essential role in assisting protein folding. The GroEL-GroES system forms a nano-cage that allows encapsulation of the non-native substrate proteins and provides a physical environment optimized to promote and accelerate protein folding. In Prochlorococcus marinus (strain MIT 9312), this protein is Chaperonin GroEL 2.